The primary structure comprises 222 residues: Ribosomal RNA small subunit methyltransferase G (222 aa).

S-adenosyl-L-methionine-binding positions include Gly-84, Phe-89, 141 to 142 (VE), and Arg-154.

This sequence belongs to the methyltransferase superfamily. RNA methyltransferase RsmG family.

Its subcellular location is the cytoplasm. The catalysed reaction is guanosine(527) in 16S rRNA + S-adenosyl-L-methionine = N(7)-methylguanosine(527) in 16S rRNA + S-adenosyl-L-homocysteine. Specifically methylates the N7 position of guanine in position 527 of 16S rRNA. The protein is Ribosomal RNA small subunit methyltransferase G of Bradyrhizobium sp. (strain BTAi1 / ATCC BAA-1182).